The chain runs to 316 residues: Ribosomal RNA small subunit methyltransferase H (316 aa).

Residues 35–37 (SGH), Asp55, Phe84, Asp105, and Gln112 contribute to the S-adenosyl-L-methionine site.

It belongs to the methyltransferase superfamily. RsmH family.

It localises to the cytoplasm. The catalysed reaction is cytidine(1402) in 16S rRNA + S-adenosyl-L-methionine = N(4)-methylcytidine(1402) in 16S rRNA + S-adenosyl-L-homocysteine + H(+). Specifically methylates the N4 position of cytidine in position 1402 (C1402) of 16S rRNA. The protein is Ribosomal RNA small subunit methyltransferase H of Streptococcus equi subsp. zooepidemicus (strain H70).